A 510-amino-acid chain; its full sequence is Hyaluronidase PH-20 (510 aa).

Residues 1–35 (MGVLKFKHIFFRSFVKSSGVSQIVFTFLLIPCCLT) form the signal peptide. 2 disulfide bridges follow: Cys60/Cys351 and Cys224/Cys238. N-linked (GlcNAc...) asparagine glycosylation is present at Asn82. The active-site Proton donor is the Glu148. 4 N-linked (GlcNAc...) asparagine glycosylation sites follow: Asn166, Asn235, Asn254, and Asn368. Disulfide bonds link Cys376–Cys387, Cys381–Cys435, and Cys437–Cys464. 3 N-linked (GlcNAc...) asparagine glycosylation sites follow: Asn393, Asn440, and Asn484. A lipid anchor (GPI-anchor amidated serine) is attached at Ser491. Residues 492–510 (TTMFIVNILFLIISSVASL) constitute a propeptide, removed in mature form.

The protein belongs to the glycosyl hydrolase 56 family. As to expression, testis.

Its subcellular location is the cell membrane. It carries out the reaction Random hydrolysis of (1-&gt;4)-linkages between N-acetyl-beta-D-glucosamine and D-glucuronate residues in hyaluronate.. In terms of biological role, involved in sperm-egg adhesion. Upon fertilization sperm must first penetrate a layer of cumulus cells that surrounds the egg before reaching the zona pellucida. The cumulus cells are embedded in a matrix containing hyaluronic acid which is formed prior to ovulation. This protein aids in penetrating the layer of cumulus cells by digesting hyaluronic acid. The polypeptide is Hyaluronidase PH-20 (SPAM1) (Macaca fascicularis (Crab-eating macaque)).